The chain runs to 342 residues: N-acetyl-gamma-glutamyl-phosphate reductase (342 aa).

Residue C147 is part of the active site.

The protein belongs to the NAGSA dehydrogenase family. Type 1 subfamily.

It localises to the cytoplasm. It catalyses the reaction N-acetyl-L-glutamate 5-semialdehyde + phosphate + NADP(+) = N-acetyl-L-glutamyl 5-phosphate + NADPH + H(+). It functions in the pathway amino-acid biosynthesis; L-arginine biosynthesis; N(2)-acetyl-L-ornithine from L-glutamate: step 3/4. In terms of biological role, catalyzes the NADPH-dependent reduction of N-acetyl-5-glutamyl phosphate to yield N-acetyl-L-glutamate 5-semialdehyde. In Methanosphaera stadtmanae (strain ATCC 43021 / DSM 3091 / JCM 11832 / MCB-3), this protein is N-acetyl-gamma-glutamyl-phosphate reductase.